Here is a 320-residue protein sequence, read N- to C-terminus: Protein TsetseEP (320 aa).

The N-terminal stretch at 1-19 (MKFFISFAFLCLVLSCVAA) is a signal peptide. Positions 192–320 (GLPEPEPEPE…ESKPNSLFNF (129 aa)) are disordered. The segment covering 194-308 (PEPEPEPEPE…EPEPEPEPQP (115 aa)) has biased composition (acidic residues). Residues 194–311 (PEPEPEPEPE…PEPEPQPEPE (118 aa)) are 59 X 2 AA tandem repeats of P-E.

Expressed in the gut, but not salivary glands, of female and male flies (at protein level). Present in vesicles in midgut cells and in the lumen of the gut.

Its subcellular location is the secreted. In Glossina morsitans morsitans (Savannah tsetse fly), this protein is Protein TsetseEP.